The following is a 302-amino-acid chain: MLAGNMEQANVFRLEEKRYKCRADTIPDMSEVLDPNDPQSFGFEALVEIKPRVFSFQKAPGLLILKNYVSSELQMQLLKSIMFTQIQDPENKTNLSPFYQLPLGNDSIWRRYYNGDGESIIDGLGETKPLTVDRLVHKKLRWVTLGEQYDWTTKEYPDPSKSPGFPKDLGDFVEKVVKESTDFLHWKAEAAIVNFYSPGDTLSAHIDESEEDLTLPLISLSMGLDCIYLIGTESRSEKPSALRLHSGDVVIMTGTSRKAFHAVPKIIPNSTPNYLLTGNKAWDGWISRKRVNFNVRQVRPSR.

Substrate-binding positions include Trp-142 and 149-151 (YDW). Residues 187–299 (KAEAAIVNFY…RVNFNVRQVR (113 aa)) enclose the Fe2OG dioxygenase domain. 194-196 (NFY) contributes to the 2-oxoglutarate binding site. Fe cation-binding residues include His-205 and Asp-207. Arg-235 lines the substrate pocket. His-261 lines the Fe cation pocket. 290–296 (RVNFNVR) contacts 2-oxoglutarate.

Belongs to the alkB family. It depends on Fe(2+) as a cofactor.

The protein resides in the cytoplasm. The protein localises to the nucleus. It carries out the reaction an N(1)-methyladenosine in tRNA + 2-oxoglutarate + O2 = an adenosine in tRNA + formaldehyde + succinate + CO2. It catalyses the reaction N(1)-methyladenosine(58) in tRNA + 2-oxoglutarate + O2 = adenosine(58) in tRNA + formaldehyde + succinate + CO2. Dioxygenase that acts as on nucleic acids, such as DNA and tRNA. Requires molecular oxygen, alpha-ketoglutarate and iron. Mainly acts as a tRNA demethylase by removing N(1)-methyladenine from various tRNAs, with a preference for N(1)-methyladenine at position 58 (m1A58) present on a stem loop structure of tRNAs. Acts as a regulator of translation initiation and elongation. Does not appear to possess DNA repair activity; no activity towards methylated DNA or etheno adducts. Exhibits a weak and unstable DNA lyase activity; this activity is probably not biologically significant and proceeds by a mechanism different from the classical dioxygenase reaction as it does not require 2-oxoglutarate or iron. The chain is tRNA demethylase abh1 (abh1) from Schizosaccharomyces pombe (strain 972 / ATCC 24843) (Fission yeast).